The chain runs to 285 residues: Bifunctional protein FolD (285 aa).

NADP(+) is bound by residues 165–167 (GRS) and serine 190.

It belongs to the tetrahydrofolate dehydrogenase/cyclohydrolase family. As to quaternary structure, homodimer.

The catalysed reaction is (6R)-5,10-methylene-5,6,7,8-tetrahydrofolate + NADP(+) = (6R)-5,10-methenyltetrahydrofolate + NADPH. It catalyses the reaction (6R)-5,10-methenyltetrahydrofolate + H2O = (6R)-10-formyltetrahydrofolate + H(+). The protein operates within one-carbon metabolism; tetrahydrofolate interconversion. Functionally, catalyzes the oxidation of 5,10-methylenetetrahydrofolate to 5,10-methenyltetrahydrofolate and then the hydrolysis of 5,10-methenyltetrahydrofolate to 10-formyltetrahydrofolate. In Ligilactobacillus salivarius (strain UCC118) (Lactobacillus salivarius), this protein is Bifunctional protein FolD.